The following is a 243-amino-acid chain: MALVKEVLEVLNRLSPFELQESWDNSGLNVGSGNSEFSQIIACLEITLQIALNAQENALIITHHPLIFKPLKTLNDEAYPGNILKILIQKNISVISMHTNFDKTHLNKHFARALLRFDGLIEKGLMLVKENANIEFDVLLEKIKLSLGVGQLACVKSSQMIKDLAFVCGSGASMFSSLKAQSCLITGDVKYHDAMIAQSLGISLIDATHYYSERGFALIVAEILHSFNYLVTIENFKNPLQII.

Residues histidine 63, histidine 64, aspartate 102, histidine 209, and glutamate 213 each coordinate a divalent metal cation.

The protein belongs to the GTP cyclohydrolase I type 2/NIF3 family. As to quaternary structure, homohexamer.

The enzyme catalyses GTP + H2O = 7,8-dihydroneopterin 3'-triphosphate + formate + H(+). The protein operates within cofactor biosynthesis; 7,8-dihydroneopterin triphosphate biosynthesis; 7,8-dihydroneopterin triphosphate from GTP: step 1/1. Its function is as follows. Converts GTP to dihydroneopterin triphosphate. The protein is GTP cyclohydrolase 1 type 2 of Helicobacter pylori (strain J99 / ATCC 700824) (Campylobacter pylori J99).